Here is a 523-residue protein sequence, read N- to C-terminus: 2-isopropylmalate synthase (523 aa).

The Pyruvate carboxyltransferase domain maps to 5–267; the sequence is VIIFDTTLRD…HTAINHQEIW (263 aa). Mn(2+) contacts are provided by D14, H202, H204, and N238. Residues 392–523 form a regulatory domain region; sequence RLDYFSVQSG…QHNENNKETV (132 aa).

It belongs to the alpha-IPM synthase/homocitrate synthase family. LeuA type 1 subfamily. As to quaternary structure, homodimer. It depends on Mn(2+) as a cofactor.

The protein resides in the cytoplasm. The catalysed reaction is 3-methyl-2-oxobutanoate + acetyl-CoA + H2O = (2S)-2-isopropylmalate + CoA + H(+). The protein operates within amino-acid biosynthesis; L-leucine biosynthesis; L-leucine from 3-methyl-2-oxobutanoate: step 1/4. Functionally, catalyzes the condensation of the acetyl group of acetyl-CoA with 3-methyl-2-oxobutanoate (2-ketoisovalerate) to form 3-carboxy-3-hydroxy-4-methylpentanoate (2-isopropylmalate). The sequence is that of 2-isopropylmalate synthase from Escherichia coli O81 (strain ED1a).